Here is a 215-residue protein sequence, read N- to C-terminus: Imidazole glycerol phosphate synthase subunit HisH (215 aa).

Residues Thr3–Leu215 form the Glutamine amidotransferase type-1 domain. Cys81 acts as the Nucleophile in catalysis. Residues His196 and Glu198 contribute to the active site.

As to quaternary structure, heterodimer of HisH and HisF.

It is found in the cytoplasm. It catalyses the reaction 5-[(5-phospho-1-deoxy-D-ribulos-1-ylimino)methylamino]-1-(5-phospho-beta-D-ribosyl)imidazole-4-carboxamide + L-glutamine = D-erythro-1-(imidazol-4-yl)glycerol 3-phosphate + 5-amino-1-(5-phospho-beta-D-ribosyl)imidazole-4-carboxamide + L-glutamate + H(+). The enzyme catalyses L-glutamine + H2O = L-glutamate + NH4(+). It participates in amino-acid biosynthesis; L-histidine biosynthesis; L-histidine from 5-phospho-alpha-D-ribose 1-diphosphate: step 5/9. In terms of biological role, IGPS catalyzes the conversion of PRFAR and glutamine to IGP, AICAR and glutamate. The HisH subunit catalyzes the hydrolysis of glutamine to glutamate and ammonia as part of the synthesis of IGP and AICAR. The resulting ammonia molecule is channeled to the active site of HisF. The chain is Imidazole glycerol phosphate synthase subunit HisH from Bifidobacterium longum (strain NCC 2705).